The chain runs to 106 residues: ATP-dependent Clp protease adapter protein ClpS (106 aa).

The interval 1 to 22 (MTDEPNQDDPQGPEVEAAKPSL) is disordered.

Belongs to the ClpS family. As to quaternary structure, binds to the N-terminal domain of the chaperone ClpA.

In terms of biological role, involved in the modulation of the specificity of the ClpAP-mediated ATP-dependent protein degradation. The polypeptide is ATP-dependent Clp protease adapter protein ClpS (Halorhodospira halophila (strain DSM 244 / SL1) (Ectothiorhodospira halophila (strain DSM 244 / SL1))).